Consider the following 753-residue polypeptide: MWKLVPAAGPGEPFRLLVGTEYVVGRKNCAFLIQDDQSISRSHAVLTVSRPETTHSQSVSVPVLTIKDTSKYGTFVNGSKLSGASRSLQSGDRVNFGVFESKFRVEYESLVVCSSCLDVAQKTALNEAIQQLGGLVVNEWTKECTHLIMESVKVTVKTICALICGRPIVKPEFFSELMKAVQSRQQLPTPESFYPSVDEPAIGIDNMDLSGHPERKKIFSGKTFVFLTAKQHKKLGPAVILGGGEAKLMAEERKETSLLVSPEVCVVDVGVTNSQILGSESMRNWTDSILAVLESNNLRAIPEAEIGLAVIFMSTEIYCNPQRQPDNKAVTASTASKVRPVSSQSSTVDETIMPTAAADYSTLNVADTEIEEQTCMEIERTTSQTTRREKVAFQQAAVRENPSTSGTVNAGMLISRVNRTSGFGQKNHPHSPSKILEVDKPRECTPRQQSNSITNYFHVARKRERAEEGEETSLSKQAKLEKKPLPVSECTESSASSAWNSEKEQHGKGNNIQLGRESGELASDKTDIKITFSENPAPKKRKELDDVSEDVETLEMVFESRDLDWEEQTANGDQEAQSNKRKKRCLETKGSRTEEGNTKQREENEMLRKEEVGSVLTLEDKSKIKEESSVSIRNKLINHNKLEDDSSRLPSKLLLTEFRSLVVSCPRSNSPTMRNTKCRGQNNFKTFRKVPYPGAGQLPYIIGGSDLVAHQARKNSELEEWLREELEEQNRRAREESLADDLFRYDPNVKRRR.

One can recognise an FHA domain in the interval 22–81 (YVVGRKNCAFLIQDDQSISRSHAVLTVSRPETTHSQSVSVPVLTIKDTSKYGTFVNGSKL). 2 BRCT domains span residues 101–191 (SKFR…PTPE) and 221–311 (GKTF…LAVI). Serine 274 is subject to Phosphoserine. Serine 343 is subject to Phosphoserine; by ATM. Positions 442–606 (RECTPRQQSN…NTKQREENEM (165 aa)) are disordered. A compositionally biased stretch (polar residues) spans 446 to 455 (PRQQSNSITN). Residues 461–467 (RKRERAE) carry the Nuclear localization signal motif. Over residues 490–500 (CTESSASSAWN) the composition is skewed to polar residues. Over residues 517 to 528 (ESGELASDKTDI) the composition is skewed to basic and acidic residues. Over residues 568–577 (QTANGDQEAQ) the composition is skewed to polar residues. Basic and acidic residues predominate over residues 585–606 (CLETKGSRTEEGNTKQREENEM). The short motif at 739-748 (ADDLFRYDPN) is the FxF/Y motif element.

This sequence belongs to the Nibrin family. In terms of assembly, component of the MRN complex composed of two heterodimers RAD50 and mre11 associated with a single NBN.

It localises to the nucleus. The protein resides in the chromosome. It is found in the PML body. The protein localises to the telomere. In terms of biological role, component of the MRN complex, which plays a central role in double-strand break (DSB) repair, DNA recombination, maintenance of telomere integrity and meiosis. The MRN complex is involved in the repair of DNA double-strand breaks (DSBs) via homologous recombination (HR), an error-free mechanism which primarily occurs during S and G2 phases. The complex (1) mediates the end resection of damaged DNA, which generates proper single-stranded DNA, a key initial steps in HR, and is (2) required for the recruitment of other repair factors and efficient activation of ATM and ATR upon DNA damage. The MRN complex possesses single-strand endonuclease activity and double-strand-specific 3'-5' exonuclease activity, which are provided by MRE11, to initiate end resection, which is required for single-strand invasion and recombination. Within the MRN complex, NBN acts as a protein-protein adapter, which specifically recognizes and binds phosphorylated proteins, promoting their recruitment to DNA damage sites. Recruits MRE11 and RAD50 components of the MRN complex to DSBs in response to DNA damage. Promotes the recruitment of PI3/PI4-kinase family members ATM, ATR, and probably DNA-PKcs to the DNA damage sites, activating their functions. Mediates the recruitment of phosphorylated RBBP8/CtIP to DSBs, leading to cooperation between the MRN complex and RBBP8/CtIP to initiate end resection. The MRN complex and rbbp8/CtIP are also required for chromosome alignment during metaphase. The chain is Nibrin (NBN) from Gallus gallus (Chicken).